The primary structure comprises 611 residues: Protein Spindly-A (611 aa).

The stretch at 1 to 390 (MEESETVLKL…KENEKIKDEL (390 aa)) forms a coiled coil. The disordered stretch occupies residues 487-611 (TCTAESTDGR…PNATTQCPQQ (125 aa)). Residues 493-511 (TDGRIHSKEDLSLSTKEQD) show a composition bias toward basic and acidic residues. Residues 552–567 (HNCSVTSASPRSTSED) are compositionally biased toward polar residues. The segment covering 570-583 (SESKRFDEEQEKRK) has biased composition (basic and acidic residues). Over residues 602-611 (PNATTQCPQQ) the composition is skewed to polar residues.

It belongs to the Spindly family.

The protein resides in the chromosome. Its subcellular location is the centromere. It is found in the kinetochore. In terms of biological role, required for the localization of dynein and dynactin to the mitotic kintochore. Dynein is believed to control the initial lateral interaction between the kinetochore and spindle microtubules and to facilitate the subsequent formation of end-on kinetochore-microtubule attachments mediated by the NDC80 complex. The chain is Protein Spindly-A (spdl1-a) from Xenopus laevis (African clawed frog).